A 123-amino-acid polypeptide reads, in one-letter code: MKHGIKALLITLSLACAGMSHSALAAASVAKPTAVETKAEAPAAQSKAAVPAKASDEEGTRVSINNASAEELARAMNGVGLKKAQAIVSYREEYGPFKTVEDLKQVPGMGNSLVERNLAVLTL.

The signal sequence occupies residues 1 to 25 (MKHGIKALLITLSLACAGMSHSALA). Over residues 40 to 53 (EAPAAQSKAAVPAK) the composition is skewed to low complexity. Residues 40-62 (EAPAAQSKAAVPAKASDEEGTRV) are disordered. HhH domains lie at 60–90 (TRVS…IVSY) and 91–120 (REEY…NLAV).

This is an uncharacterized protein from Escherichia coli (strain K12).